The primary structure comprises 719 residues: Pesticidal crystal protein Cry1Ia (719 aa).

Belongs to the delta endotoxin family.

In terms of biological role, promotes colloidosmotic lysis by binding to the midgut epithelial cells of certain coleopteran and lepidopteran species. Active on Plutella xylostella and Bombyx mori. This Bacillus thuringiensis subsp. kurstaki protein is Pesticidal crystal protein Cry1Ia (cry1Ia).